A 262-amino-acid chain; its full sequence is Type II pantothenate kinase (262 aa).

7 to 14 (DAGGSLVK) lines the ATP pocket. The active-site Proton acceptor is E71. Residues T101, 119–123 (GGLLT), and Y135 contribute to the ATP site.

The protein belongs to the type II pantothenate kinase family. As to quaternary structure, homodimer.

The protein localises to the cytoplasm. The catalysed reaction is (R)-pantothenate + ATP = (R)-4'-phosphopantothenate + ADP + H(+). Its pathway is cofactor biosynthesis; coenzyme A biosynthesis; CoA from (R)-pantothenate: step 1/5. In terms of biological role, catalyzes the phosphorylation of pantothenate (Pan), the first step in CoA biosynthesis. This is Type II pantothenate kinase from Oceanobacillus iheyensis (strain DSM 14371 / CIP 107618 / JCM 11309 / KCTC 3954 / HTE831).